The chain runs to 306 residues: MTDKIAVLLGGTSAEREVSLNSGAAVLAGLREGGIDAYPVDPKEVDVTQLKSMGFQKVFIALHGRGGEDGTLQGMLELMGLPYTGSGVMASALSMDKLRSKLLWQGAGLPVAPWVALTRVEFEKGLSDKQLAEISALGLPVIVKPSREGSSVGMSKVVAENALQDALRLAFQHDEEVLIEKWLSGPEFTVAILGEEILPSVRIQPSGTFYDYEAKYLSDETQYFCPAGLEASQEANLQALVLKAWTTLGCKGWGRIDVMLDSDGQFYLLEANTSPGMTSHSLVPMAARQAGMSFSQLVVRILELAD.

Active-site residues include glutamate 15 and serine 150. An ATP-grasp domain is found at 101-303 (KLLWQGAGLP…FSQLVVRILE (203 aa)). 134-189 (ISALGLPVIVKPSREGSSVGMSKVVAENALQDALRLAFQHDEEVLIEKWLSGPEFT) lines the ATP pocket. Residues aspartate 257, glutamate 270, and asparagine 272 each coordinate Mg(2+). The active site involves serine 281.

The protein belongs to the D-alanine--D-alanine ligase family. As to quaternary structure, monomer. It depends on Mg(2+) as a cofactor. The cofactor is Mn(2+).

Its subcellular location is the cytoplasm. The catalysed reaction is 2 D-alanine + ATP = D-alanyl-D-alanine + ADP + phosphate + H(+). It participates in cell wall biogenesis; peptidoglycan biosynthesis. Its function is as follows. Cell wall formation. The chain is D-alanine--D-alanine ligase B (ddlB) from Escherichia coli O157:H7.